Reading from the N-terminus, the 255-residue chain is Large ribosomal subunit protein uL4 (255 aa).

The protein belongs to the universal ribosomal protein uL4 family. As to quaternary structure, part of the 50S ribosomal subunit.

One of the primary rRNA binding proteins, this protein initially binds near the 5'-end of the 23S rRNA. It is important during the early stages of 50S assembly. It makes multiple contacts with different domains of the 23S rRNA in the assembled 50S subunit and ribosome. Its function is as follows. Forms part of the polypeptide exit tunnel. This is Large ribosomal subunit protein uL4 from Pyrococcus abyssi (strain GE5 / Orsay).